The chain runs to 336 residues: Small ribosomal subunit protein RACK1y (336 aa).

WD repeat units follow at residues 15 to 55 (GHND…TAVA), 74 to 113 (GHSH…TTRR), 116 to 155 (GHTK…KYTI), 164 to 205 (GHTG…LRTK), 208 to 247 (GHNG…MLYK), 249 to 287 (DAGA…VMQD), and 297 to 336 (SQML…GYAI).

It belongs to the WD repeat G protein beta family. Ribosomal protein RACK1 subfamily. As to quaternary structure, homodimer and heterodimer with RACK1A.

Component of the RACK1 regulatory proteins that play a role in multiple signal transduction pathways. The protein is Small ribosomal subunit protein RACK1y (RACK1B) of Oryza sativa subsp. japonica (Rice).